A 452-amino-acid chain; its full sequence is Bifunctional protein GlmU (452 aa).

The tract at residues 1 to 226 (MSLTTVILAA…PMEVEGANNR (226 aa)) is pyrophosphorylase. UDP-N-acetyl-alpha-D-glucosamine-binding positions include 8–11 (LAAG), Lys-22, Gln-73, 78–79 (GT), 100–102 (YGD), Gly-137, Glu-151, Asn-166, and Asn-224. Residue Asp-102 participates in Mg(2+) binding. A Mg(2+)-binding site is contributed by Asn-224. Positions 227 to 247 (IQLAGLERAYQAWQAQELMLN) are linker. The segment at 248-452 (GATLADPARI…LDGWKRPVKK (205 aa)) is N-acetyltransferase. The UDP-N-acetyl-alpha-D-glucosamine site is built by Arg-330 and Lys-348. Residue His-360 is the Proton acceptor of the active site. Residues Tyr-363 and Asn-374 each contribute to the UDP-N-acetyl-alpha-D-glucosamine site. Acetyl-CoA-binding positions include Ala-377, 383-384 (NY), Ser-402, Ala-420, and Arg-437.

This sequence in the N-terminal section; belongs to the N-acetylglucosamine-1-phosphate uridyltransferase family. The protein in the C-terminal section; belongs to the transferase hexapeptide repeat family. Homotrimer. It depends on Mg(2+) as a cofactor.

The protein localises to the cytoplasm. The enzyme catalyses alpha-D-glucosamine 1-phosphate + acetyl-CoA = N-acetyl-alpha-D-glucosamine 1-phosphate + CoA + H(+). The catalysed reaction is N-acetyl-alpha-D-glucosamine 1-phosphate + UTP + H(+) = UDP-N-acetyl-alpha-D-glucosamine + diphosphate. Its pathway is nucleotide-sugar biosynthesis; UDP-N-acetyl-alpha-D-glucosamine biosynthesis; N-acetyl-alpha-D-glucosamine 1-phosphate from alpha-D-glucosamine 6-phosphate (route II): step 2/2. It participates in nucleotide-sugar biosynthesis; UDP-N-acetyl-alpha-D-glucosamine biosynthesis; UDP-N-acetyl-alpha-D-glucosamine from N-acetyl-alpha-D-glucosamine 1-phosphate: step 1/1. It functions in the pathway bacterial outer membrane biogenesis; LPS lipid A biosynthesis. In terms of biological role, catalyzes the last two sequential reactions in the de novo biosynthetic pathway for UDP-N-acetylglucosamine (UDP-GlcNAc). The C-terminal domain catalyzes the transfer of acetyl group from acetyl coenzyme A to glucosamine-1-phosphate (GlcN-1-P) to produce N-acetylglucosamine-1-phosphate (GlcNAc-1-P), which is converted into UDP-GlcNAc by the transfer of uridine 5-monophosphate (from uridine 5-triphosphate), a reaction catalyzed by the N-terminal domain. The protein is Bifunctional protein GlmU of Pseudoalteromonas translucida (strain TAC 125).